Consider the following 384-residue polypeptide: 8-amino-7-oxononanoate synthase (384 aa).

Arg23 serves as a coordination point for substrate. 110–111 is a pyridoxal 5'-phosphate binding site; that stretch reads GF. His135 is a binding site for substrate. Ser179, His206, and Thr232 together coordinate pyridoxal 5'-phosphate. Position 235 is an N6-(pyridoxal phosphate)lysine (Lys235). Position 348 (Thr348) interacts with substrate.

It belongs to the class-II pyridoxal-phosphate-dependent aminotransferase family. BioF subfamily. Homodimer. It depends on pyridoxal 5'-phosphate as a cofactor.

The enzyme catalyses 6-carboxyhexanoyl-[ACP] + L-alanine + H(+) = (8S)-8-amino-7-oxononanoate + holo-[ACP] + CO2. The protein operates within cofactor biosynthesis; biotin biosynthesis. Catalyzes the decarboxylative condensation of pimeloyl-[acyl-carrier protein] and L-alanine to produce 8-amino-7-oxononanoate (AON), [acyl-carrier protein], and carbon dioxide. The chain is 8-amino-7-oxononanoate synthase from Vibrio cholerae serotype O1 (strain ATCC 39315 / El Tor Inaba N16961).